A 495-amino-acid polypeptide reads, in one-letter code: UDP-N-acetylmuramoyl-L-alanyl-D-glutamate--2,6-diaminopimelate ligase (495 aa).

Position 29 (S29) interacts with UDP-N-acetyl-alpha-D-muramoyl-L-alanyl-D-glutamate. Residue 111-117 (GTNGKTS) coordinates ATP. Residues 153–154 (TT), S180, Q186, and R188 each bind UDP-N-acetyl-alpha-D-muramoyl-L-alanyl-D-glutamate. The residue at position 220 (K220) is an N6-carboxylysine. Meso-2,6-diaminopimelate contacts are provided by residues R384, 408–411 (DNPR), G459, and E463. A Meso-diaminopimelate recognition motif motif is present at residues 408–411 (DNPR).

This sequence belongs to the MurCDEF family. MurE subfamily. Requires Mg(2+) as cofactor. Carboxylation is probably crucial for Mg(2+) binding and, consequently, for the gamma-phosphate positioning of ATP.

Its subcellular location is the cytoplasm. It carries out the reaction UDP-N-acetyl-alpha-D-muramoyl-L-alanyl-D-glutamate + meso-2,6-diaminopimelate + ATP = UDP-N-acetyl-alpha-D-muramoyl-L-alanyl-gamma-D-glutamyl-meso-2,6-diaminopimelate + ADP + phosphate + H(+). It participates in cell wall biogenesis; peptidoglycan biosynthesis. Functionally, catalyzes the addition of meso-diaminopimelic acid to the nucleotide precursor UDP-N-acetylmuramoyl-L-alanyl-D-glutamate (UMAG) in the biosynthesis of bacterial cell-wall peptidoglycan. In Xanthomonas oryzae pv. oryzae (strain MAFF 311018), this protein is UDP-N-acetylmuramoyl-L-alanyl-D-glutamate--2,6-diaminopimelate ligase.